The primary structure comprises 259 residues: Kynurenine formamidase (259 aa).

The HGGXW signature appears at 34–38 (HGGAW). The active-site Nucleophile is Ser103. Active-site residues include Asp196 and His228.

This sequence belongs to the kynurenine formamidase family. In terms of assembly, homodimer.

The catalysed reaction is N-formyl-L-kynurenine + H2O = L-kynurenine + formate + H(+). Its pathway is amino-acid degradation; L-tryptophan degradation via kynurenine pathway; L-kynurenine from L-tryptophan: step 2/2. Catalyzes the hydrolysis of N-formyl-L-kynurenine to L-kynurenine, the second step in the kynurenine pathway of tryptophan degradation. Kynurenine may be further oxidized to nicotinic acid, NAD(H) and NADP(H). Required for elimination of toxic metabolites. In Meyerozyma guilliermondii (strain ATCC 6260 / CBS 566 / DSM 6381 / JCM 1539 / NBRC 10279 / NRRL Y-324) (Yeast), this protein is Kynurenine formamidase.